A 547-amino-acid polypeptide reads, in one-letter code: MKTKFIFVTGGVLSSLGKGLAAASLGALLQTRGLSVTIQKLDPYINVDPGTMNPFQHGEVFVTDDGAETDLDLGHYERYLNVPMSRKNNTTSGAIYNQVIAKERHGDYLGATVQVIPHITDEIKSVVLSLAEGEDAPDVAIIEIGGTVGDIEGLPFLEAIRQLRSELGRDNCLNIHLTLVPYLRSAGEHKTKPTQHSVKELLSIGIQPDIILCRCEQSIPEELRRKIALFCNVDQDAVFSSVDVNNIYEVPLKFYAEGFDQKVAIMLRLPARNAQLDAWEKLVSDSDNPHGKVTVAIVGKYVDLKEAYKSLHEALIHGGVANRVQVDLRYVNSENVDDSNAAEHFKGCDGILVPGGFGYRGVEGKIAAIRYARENKVPFFGICLGMQCAVIEFARHMADMADANSEEFDHRSKHKVIYLMTEWYDFRTRNVEKRDAGSDKGGTMRLGSYPCKVMPESRAFEAYKTDMVEERHRHRYEFNNEFKEALAEKGMIFSGTSPDGSLMEIIELPEHPWFLGCQFHPEFKSRPMNAHPLFREFIGAAKKHAKV.

Positions 1–269 (MKTKFIFVTG…DQKVAIMLRL (269 aa)) are amidoligase domain. Ser-14 contacts CTP. Ser-14 contributes to the UTP binding site. Residues 15 to 20 (SLGKGL) and Asp-72 each bind ATP. Asp-72 and Glu-143 together coordinate Mg(2+). CTP contacts are provided by residues 150–152 (DIE), 190–195 (KTKPTQ), and Lys-226. UTP-binding positions include 190 to 195 (KTKPTQ) and Lys-226. Positions 294–547 (TVAIVGKYVD…IGAAKKHAKV (254 aa)) constitute a Glutamine amidotransferase type-1 domain. Position 356 (Gly-356) interacts with L-glutamine. The active-site Nucleophile; for glutamine hydrolysis is Cys-383. L-glutamine-binding positions include 384-387 (LGMQ), Glu-407, and Arg-475. Residues His-520 and Glu-522 contribute to the active site.

It belongs to the CTP synthase family. In terms of assembly, homotetramer.

The enzyme catalyses UTP + L-glutamine + ATP + H2O = CTP + L-glutamate + ADP + phosphate + 2 H(+). It catalyses the reaction L-glutamine + H2O = L-glutamate + NH4(+). The catalysed reaction is UTP + NH4(+) + ATP = CTP + ADP + phosphate + 2 H(+). The protein operates within pyrimidine metabolism; CTP biosynthesis via de novo pathway; CTP from UDP: step 2/2. Allosterically activated by GTP, when glutamine is the substrate; GTP has no effect on the reaction when ammonia is the substrate. The allosteric effector GTP functions by stabilizing the protein conformation that binds the tetrahedral intermediate(s) formed during glutamine hydrolysis. Inhibited by the product CTP, via allosteric rather than competitive inhibition. In terms of biological role, catalyzes the ATP-dependent amination of UTP to CTP with either L-glutamine or ammonia as the source of nitrogen. Regulates intracellular CTP levels through interactions with the four ribonucleotide triphosphates. This chain is CTP synthase, found in Desulfovibrio desulfuricans (strain ATCC 27774 / DSM 6949 / MB).